The primary structure comprises 135 residues: Transcription antitermination protein NusB (135 aa).

The tract at residues 115-135 is disordered; sequence ATPAESTGRGSAVDSIPGQPS.

This sequence belongs to the NusB family.

Involved in transcription antitermination. Required for transcription of ribosomal RNA (rRNA) genes. Binds specifically to the boxA antiterminator sequence of the ribosomal RNA (rrn) operons. The chain is Transcription antitermination protein NusB from Frankia casuarinae (strain DSM 45818 / CECT 9043 / HFP020203 / CcI3).